The following is a 107-amino-acid chain: Virulence factor PGA16 (107 aa).

Residues Met-1–Ala-18 form the signal peptide. Residues Ser-26–Asn-56 are disordered. Residues Asn-33–Asn-56 show a composition bias toward low complexity. N-linked (GlcNAc...) asparagine glycosylation is found at Asn-53 and Asn-56. The GPI-anchor amidated glycine moiety is linked to residue Gly-76. The propeptide at Val-77–Leu-107 is removed in mature form.

The protein resides in the cell membrane. Functionally, cell surface GPI-anchored protein required for virulence. Mediates hyphal ramification which is important for the interaction with host cells. This is Virulence factor PGA16 (PGA16) from Candida albicans (strain SC5314 / ATCC MYA-2876) (Yeast).